The chain runs to 88 residues: Small ribosomal subunit protein uS17 (88 aa).

It belongs to the universal ribosomal protein uS17 family. As to quaternary structure, part of the 30S ribosomal subunit.

One of the primary rRNA binding proteins, it binds specifically to the 5'-end of 16S ribosomal RNA. The chain is Small ribosomal subunit protein uS17 from Lactobacillus gasseri (strain ATCC 33323 / DSM 20243 / BCRC 14619 / CIP 102991 / JCM 1131 / KCTC 3163 / NCIMB 11718 / NCTC 13722 / AM63).